A 431-amino-acid chain; its full sequence is MTKLHYKVKDISLAAWGRKEIEIAENEMPGLMTLRKKYGPAQILKGARIAGCLHMTIQTAVLIETLTALGAQVQWSSCNIFSTQDQAAAAIAATGVPVYAWKGETEEEYNWCVEQTIVFQDGQPLNMILDDGGDLTNLVHEKYPQFLAGIKGISEETTTGVHNLYKMFKEGKLKVPAINVNDSVTKSKFDNLYGCRESLIDGIKRATDVMIAGKVAVVAGYGDVGKGCAQSLSKMGARVLVTEIDPINALQACMDGYQIVTMETAAPLSNIFVTTTGCRDIVRGEHFAVMKEDAIVCNIGHFDCEIDVAWLNANAKKDTVKPQVDRYTLANGVHIILLAEGRLVNLGCGTGHPSFVMSNSFCNQTLAQIALWTKTEEYPLGVHFLPKILDEEVARLHLDQLGAKLTTLTEKQSEYLSVPVAGPYKVDHYRY.

Thr56, Asp131, and Glu156 together coordinate substrate. 157–159 is a binding site for NAD(+); it reads TTT. Substrate contacts are provided by Lys186 and Asp190. NAD(+) contacts are provided by residues Asn191, 222-227, Glu243, 299-301, and Asn345; these read GDVGKG and IGH.

This sequence belongs to the adenosylhomocysteinase family. In terms of assembly, homotetramer. NAD(+) serves as cofactor.

The catalysed reaction is S-adenosyl-L-homocysteine + H2O = L-homocysteine + adenosine. It participates in amino-acid biosynthesis; L-homocysteine biosynthesis; L-homocysteine from S-adenosyl-L-homocysteine: step 1/1. Adenosylhomocysteine is a competitive inhibitor of S-adenosyl-L-methionine-dependent methyl transferase reactions; therefore adenosylhomocysteinase may play a key role in the control of methylations via regulation of the intracellular concentration of adenosylhomocysteine. The protein is Adenosylhomocysteinase (sahA) of Dictyostelium discoideum (Social amoeba).